The chain runs to 468 residues: ATP synthase subunit beta 1 (468 aa).

Position 155 to 162 (155 to 162) interacts with ATP; the sequence is GGAGVGKT.

This sequence belongs to the ATPase alpha/beta chains family. As to quaternary structure, F-type ATPases have 2 components, CF(1) - the catalytic core - and CF(0) - the membrane proton channel. CF(1) has five subunits: alpha(3), beta(3), gamma(1), delta(1), epsilon(1). CF(0) has three main subunits: a(1), b(2) and c(9-12). The alpha and beta chains form an alternating ring which encloses part of the gamma chain. CF(1) is attached to CF(0) by a central stalk formed by the gamma and epsilon chains, while a peripheral stalk is formed by the delta and b chains.

The protein resides in the cell inner membrane. It carries out the reaction ATP + H2O + 4 H(+)(in) = ADP + phosphate + 5 H(+)(out). In terms of biological role, produces ATP from ADP in the presence of a proton gradient across the membrane. The catalytic sites are hosted primarily by the beta subunits. The protein is ATP synthase subunit beta 1 of Syntrophotalea carbinolica (strain DSM 2380 / NBRC 103641 / GraBd1) (Pelobacter carbinolicus).